Here is a 238-residue protein sequence, read N- to C-terminus: 2-C-methyl-D-erythritol 4-phosphate cytidylyltransferase (238 aa).

Belongs to the IspD/TarI cytidylyltransferase family. IspD subfamily.

It carries out the reaction 2-C-methyl-D-erythritol 4-phosphate + CTP + H(+) = 4-CDP-2-C-methyl-D-erythritol + diphosphate. Its pathway is isoprenoid biosynthesis; isopentenyl diphosphate biosynthesis via DXP pathway; isopentenyl diphosphate from 1-deoxy-D-xylulose 5-phosphate: step 2/6. Catalyzes the formation of 4-diphosphocytidyl-2-C-methyl-D-erythritol from CTP and 2-C-methyl-D-erythritol 4-phosphate (MEP). In Acinetobacter baumannii (strain ATCC 17978 / DSM 105126 / CIP 53.77 / LMG 1025 / NCDC KC755 / 5377), this protein is 2-C-methyl-D-erythritol 4-phosphate cytidylyltransferase.